The sequence spans 157 residues: MKVRTFEGDYRGEGLRIAVVVSRFNDLLTEELLKGALDCFKRHGVEEVHIFRVPGSFEIPITVKKIAKRGYDAILALGVLIKGETRHFELVASQVSRGIAQVSLEEGIPVIFGIVPAEDEIQAISRSGIKSNRGFEYALTTIEMANLFRKLGENNER.

5-amino-6-(D-ribitylamino)uracil-binding positions include Phe-24, 56-58 (SFE), and 79-81 (VLI). Residue 84–85 (ET) coordinates (2S)-2-hydroxy-3-oxobutyl phosphate. Catalysis depends on His-87, which acts as the Proton donor. Phe-112 is a 5-amino-6-(D-ribitylamino)uracil binding site. Position 126 (Arg-126) interacts with (2S)-2-hydroxy-3-oxobutyl phosphate.

Belongs to the DMRL synthase family.

The catalysed reaction is (2S)-2-hydroxy-3-oxobutyl phosphate + 5-amino-6-(D-ribitylamino)uracil = 6,7-dimethyl-8-(1-D-ribityl)lumazine + phosphate + 2 H2O + H(+). Its pathway is cofactor biosynthesis; riboflavin biosynthesis; riboflavin from 2-hydroxy-3-oxobutyl phosphate and 5-amino-6-(D-ribitylamino)uracil: step 1/2. Catalyzes the formation of 6,7-dimethyl-8-ribityllumazine by condensation of 5-amino-6-(D-ribitylamino)uracil with 3,4-dihydroxy-2-butanone 4-phosphate. This is the penultimate step in the biosynthesis of riboflavin. In Pyrococcus furiosus (strain ATCC 43587 / DSM 3638 / JCM 8422 / Vc1), this protein is 6,7-dimethyl-8-ribityllumazine synthase.